A 455-amino-acid chain; its full sequence is ATP-dependent protease ATPase subunit HslU (455 aa).

ATP is bound by residues Ile-19 and 61–66 (GVGKTE). Residues 144–163 (ESKVGFANEPAEDAASKKEK) form a disordered region. The ATP site is built by Asp-268, Glu-333, and Arg-405.

Belongs to the ClpX chaperone family. HslU subfamily. In terms of assembly, a double ring-shaped homohexamer of HslV is capped on each side by a ring-shaped HslU homohexamer. The assembly of the HslU/HslV complex is dependent on binding of ATP.

The protein localises to the cytoplasm. ATPase subunit of a proteasome-like degradation complex; this subunit has chaperone activity. The binding of ATP and its subsequent hydrolysis by HslU are essential for unfolding of protein substrates subsequently hydrolyzed by HslV. HslU recognizes the N-terminal part of its protein substrates and unfolds these before they are guided to HslV for hydrolysis. The sequence is that of ATP-dependent protease ATPase subunit HslU from Francisella tularensis subsp. holarctica (strain FTNF002-00 / FTA).